The sequence spans 474 residues: Coiled-coil domain-containing protein 174 (474 aa).

Disordered stretches follow at residues 39-86 (GVFG…REKL) and 129-170 (GATR…PSEE). Composition is skewed to basic and acidic residues over residues 64-86 (RAEK…REKL) and 129-142 (GATR…ERDA). The stretch at 64–98 (RAEKDAEQKLEEQKTLDKSREKLEEKAKLYEKMTK) forms a coiled coil. A compositionally biased stretch (acidic residues) spans 148–157 (NDDDDEEEFS). The residue at position 206 (S206) is a Phosphoserine. Residues 276-317 (LEMLREQTTDQRIKRENIKEKRKAILEARLAKLRQKKMKKSK) are a coiled coil. 2 disordered regions span residues 309–372 (RQKK…IREW) and 389–461 (ELRA…VTFQ). 2 stretches are compositionally biased toward basic and acidic residues: residues 316–327 (SKVDGTEEESRA) and 356–372 (IQER…IREW). Over residues 410–419 (RTGSLSSQPW) the composition is skewed to polar residues. A compositionally biased stretch (low complexity) spans 430-453 (GHSSGQSQEPSSSHTSTPASESSP).

It localises to the nucleus. In terms of biological role, probably involved in neuronal development. The polypeptide is Coiled-coil domain-containing protein 174 (Ccdc174) (Rattus norvegicus (Rat)).